A 103-amino-acid polypeptide reads, in one-letter code: Small ribosomal subunit protein uS10 (103 aa).

Belongs to the universal ribosomal protein uS10 family. Part of the 30S ribosomal subunit.

Its function is as follows. Involved in the binding of tRNA to the ribosomes. This Xylella fastidiosa (strain 9a5c) protein is Small ribosomal subunit protein uS10.